Here is a 551-residue protein sequence, read N- to C-terminus: Alkaline nuclease (551 aa).

This sequence belongs to the herpesviridae alkaline nuclease family. As to quaternary structure, interacts with major DNA-binding protein; this interaction increases the nuclease processivity of the alkaline exonuclease.

The protein localises to the host nucleus. Its subcellular location is the host cytoplasm. Plays a role in processing non linear or branched viral DNA intermediates in order to promote the production of mature packaged unit-length linear progeny viral DNA molecules. Exhibits endonuclease and exonuclease activities and accepts both double-stranded and single-stranded DNA as substrate. Exonuclease digestion of DNA is in the 5'-&gt; 3' direction and the products are 5'-monophosphate nucleosides. Additionally, forms a recombinase with the major DNA-binding protein, which displays strand exchange activity. The chain is Alkaline nuclease from Varicella-zoster virus (strain Oka vaccine) (HHV-3).